The sequence spans 735 residues: F-box and leucine-rich repeat protein 13 (735 aa).

One can recognise an F-box domain in the interval 152–198 (KCDISLLPERAILQIFFYLSLKDVIICGQVNHAWMLMTQLNSLWNAI). 17 LRR repeats span residues 230-254 (GCLL…NVSD), 255-280 (CPTF…NLSN), 281-305 (TTIT…SLAY), 306-333 (CRRF…DLSG), 334-359 (CTQI…TIND), 360-385 (MPTL…VFTG), 386-406 (APHI…RKIR), 410-435 (NKRV…YMAD), 436-460 (CKGI…NLAN), 461-488 (CVRI…NLSN), 489-514 (CVRL…SLRN), 515-538 (CEHL…IDLS), 539-563 (GTDI…SVSE), 564-589 (CYRI…DVSY), 590-615 (CSQL…SIAG), 616-641 (CPKI…DISG), and 642-667 (CVLL…KMQY). A compositionally biased stretch (polar residues) spans 682 to 692 (KVQQQEYNTND). A disordered region spans residues 682–703 (KVQQQEYNTNDPPRWFGYDREG).

The protein belongs to the DRC6 family. As to quaternary structure, component of the nexin-dynein regulatory complex (N-DRC). Directly interacts with SKP1 and CUL1. Interacts with TCTE1/DRC5.

It localises to the cytoplasm. Its subcellular location is the cytoskeleton. The protein localises to the flagellum axoneme. The protein resides in the microtubule organizing center. It is found in the centrosome. Functionally, substrate-recognition component of the SCF (SKP1-CUL1-F-box protein)-type E3 ubiquitin ligase complex. Component of the nexin-dynein regulatory complex (N-DRC), a key regulator of ciliary/flagellar motility which maintains the alignment and integrity of the distal axoneme and regulates microtubule sliding in motile axonemes. Specifically targets CEP192 isoform 3 for ubiquitin-mediated proteolysis and thereby acts as a regulator of microtubule nucleation activity. The protein is F-box and leucine-rich repeat protein 13 (FBXL13) of Homo sapiens (Human).